The primary structure comprises 52 residues: Ovomucoid (52 aa).

Residues 2–52 (VDCSDYPKPVCTLEEMPLCGSDNKTYGNKCNFCNAVVDSNGTLTLSHFGKC) enclose the Kazal-like domain. Disulfide bonds link Cys-4/Cys-34, Cys-12/Cys-31, and Cys-20/Cys-52. Asn-41 carries an N-linked (GlcNAc...) asparagine glycan.

The protein resides in the secreted. The chain is Ovomucoid from Scythrops novaehollandiae (Channel-billed cuckoo).